The primary structure comprises 320 residues: Transaldolase (320 aa).

Residue lysine 126 is the Schiff-base intermediate with substrate of the active site.

The protein belongs to the transaldolase family. Type 1 subfamily. As to quaternary structure, homodimer.

It is found in the cytoplasm. It catalyses the reaction D-sedoheptulose 7-phosphate + D-glyceraldehyde 3-phosphate = D-erythrose 4-phosphate + beta-D-fructose 6-phosphate. The protein operates within carbohydrate degradation; pentose phosphate pathway; D-glyceraldehyde 3-phosphate and beta-D-fructose 6-phosphate from D-ribose 5-phosphate and D-xylulose 5-phosphate (non-oxidative stage): step 2/3. Functionally, transaldolase is important for the balance of metabolites in the pentose-phosphate pathway. This Bordetella pertussis (strain Tohama I / ATCC BAA-589 / NCTC 13251) protein is Transaldolase.